The sequence spans 267 residues: Small ribosomal subunit protein uS2 (267 aa).

Residues 237-267 (IGESAAAPSEPALETASAEATAEGEQPGSQA) are disordered. Low complexity predominate over residues 238 to 261 (GESAAAPSEPALETASAEATAEGE).

Belongs to the universal ribosomal protein uS2 family.

In Chelativorans sp. (strain BNC1), this protein is Small ribosomal subunit protein uS2.